The chain runs to 346 residues: Cyclic GMP-AMP synthase-like protein (346 aa).

ATP is bound by residues S58 and 70-72 (EFD). 3 residues coordinate Mg(2+): E70, D72, and D165. GTP-binding positions include D165 and 212–219 (MVCAPHWE). ATP is bound by residues 216-219 (PHWE), K237, and 252-256 (SYMLK).

This sequence belongs to the mab-21 family. It depends on Mg(2+) as a cofactor. Mn(2+) is required as a cofactor.

With respect to regulation, activated in response of some unknown stimulus. Not activated in response to L-monocytogenes infection. Probable nucleotidyltransferase that catalyzes the formation of cyclic dinucleotide second messenger in response to some unknown stimulus. Does not catalyze the formation of cyclic GMP-AMP from ATP and GTP. The protein is Cyclic GMP-AMP synthase-like protein of Drosophila melanogaster (Fruit fly).